The following is a 248-amino-acid chain: Probable transcriptional regulatory protein LAR_0538 (248 aa).

Residues 1 to 22 form a disordered region; the sequence is MSGHSKWHNIQGRKNAQDAKRG.

Belongs to the TACO1 family.

Its subcellular location is the cytoplasm. The chain is Probable transcriptional regulatory protein LAR_0538 from Limosilactobacillus reuteri subsp. reuteri (strain JCM 1112) (Lactobacillus reuteri).